The sequence spans 314 residues: Aspartate carbamoyltransferase catalytic subunit (314 aa).

Carbamoyl phosphate contacts are provided by R64 and T65. K92 is a binding site for L-aspartate. Residues R114, H142, and Q145 each coordinate carbamoyl phosphate. L-aspartate is bound by residues R175 and R230. Carbamoyl phosphate is bound by residues G271 and P272.

Belongs to the aspartate/ornithine carbamoyltransferase superfamily. ATCase family. Heterododecamer (2C3:3R2) of six catalytic PyrB chains organized as two trimers (C3), and six regulatory PyrI chains organized as three dimers (R2).

It catalyses the reaction carbamoyl phosphate + L-aspartate = N-carbamoyl-L-aspartate + phosphate + H(+). Its pathway is pyrimidine metabolism; UMP biosynthesis via de novo pathway; (S)-dihydroorotate from bicarbonate: step 2/3. Its function is as follows. Catalyzes the condensation of carbamoyl phosphate and aspartate to form carbamoyl aspartate and inorganic phosphate, the committed step in the de novo pyrimidine nucleotide biosynthesis pathway. This Deinococcus radiodurans (strain ATCC 13939 / DSM 20539 / JCM 16871 / CCUG 27074 / LMG 4051 / NBRC 15346 / NCIMB 9279 / VKM B-1422 / R1) protein is Aspartate carbamoyltransferase catalytic subunit.